We begin with the raw amino-acid sequence, 1024 residues long: Error-prone DNA polymerase (1024 aa).

Belongs to the DNA polymerase type-C family. DnaE2 subfamily.

It localises to the cytoplasm. It carries out the reaction DNA(n) + a 2'-deoxyribonucleoside 5'-triphosphate = DNA(n+1) + diphosphate. Functionally, DNA polymerase involved in damage-induced mutagenesis and translesion synthesis (TLS). It is not the major replicative DNA polymerase. The sequence is that of Error-prone DNA polymerase from Vibrio vulnificus (strain CMCP6).